The sequence spans 234 residues: UstYa family oxidase phomYd' (234 aa).

The interval 1-26 (MEKFFSPSRHNYADLSPTDVPASEES) is disordered. Residues 47–69 (VLVNRLLAASTVALVMVSLWLGW) form a helical membrane-spanning segment. Residues 151–155 (HWDHC) carry the HXXHC 1 motif. An N-linked (GlcNAc...) asparagine glycan is attached at N208.

It belongs to the ustYa family.

Its subcellular location is the membrane. The protein operates within mycotoxin biosynthesis. In terms of biological role, ustYa family oxidase; part of the gene cluster that mediates the biosynthesis of the phomopsins, a group of hexapeptide mycotoxins which infects lupins and causes lupinosis disease in livestock. Within the pathway, phomYd' catalyzes the desaturation of the Asp moiety into 2,3-dehydroaspartic acid (dAsp). The pathway starts with the processing of the precursor phomA' by several endopeptidases including kexin proteases as well as the cluster-specific S41 family peptidase phomP1 and the oligopeptidase phomG' to produce 10 identical copies of the hexapeptide Tyr-Val-Ile-Pro-Ile-Asp. After being excised from the precursor peptide, the core peptides are cyclized and modified post-translationally by enzymes encoded within the gene cluster. The timing and order of proteolysis of the phomA' precursor and PTMs are still unknown. Two tyrosinase-like enzymes, phomQ1' and phomQ2, catalyze the chlorination and hydroxylation of Tyr, respectively. PhomYb, is proposed to be involved in the construction of the macrocyclic structure. The other 4 ustYa family proteins may be involved in PTMs that generate the unique structure of phomopsin A. PhomYa' is required for the hydroxylation of C-beta of Tyr. PhomYc', phomYd', and phomYe are responsible for the biosynthesis of 2,3-dehydroisoleucine (dIle), 2,3-dehydroaspartic acid (dAsp), and 3,4-dehydroproline (dPro), respectively. While dIle formation by phomYc' is indispensable for the installation of dAsp by phomYd', the order of the other PTMs have not been elucidated yet. Most of the biosynthetic enzymes likely have broad substrate specificity, and thus, there might be a metabolic grid from a precursor to phomopsin A. The enzyme(s) responsible for the biosynthesis of 3,4-dehydrovaline (dVal) have also not been identified yet. Finally, phomM' acts as an S-adenosylmethionine-dependent alpha-N-methyltransferase that catalyzes two successive N-methylation reactions, converting N-desmethyl-phomopsin A to phomopsin A and phomopsin A further to an N,N-dimethylated congener called phomopsin E. This Diaporthe leptostromiformis (Lupinosis disease fungus) protein is UstYa family oxidase phomYd'.